Reading from the N-terminus, the 483-residue chain is MARAIMFQGTGSDVGKSVLVAGLCRVARNRGLKVRPFKPQNMSNNAAVSDDGGEIGRAQWLQALACGVPSSVHMNPVLLKPQTDMGSQLIVQGQVRGEARGRYYQELKPQLMAAVMESFAKVGDGADLVLVEGAGSPAEINLRAGDIANMGFATHADVPVVLVGDIDRGGVIASLVGTHTILPQEDRAMVRGFLINKFRGDISLFDDGLAAITRFTGWRSFGVVPWLKAVSRLPAEDSVVLERAVRGDKKALIVAVPMLPRIANFDDLDPLKAEPAVEVVMVPPGSSLPADAGLVVLPGTKSTIADLLALRENGWDRELVAHVKRGGHVLGICGGFQMLGRRISDPAGIEGNVRDIEGLGLLDIETMMEPEKVVRNVEAVSLLHDEPLEGYEIHIGRTSGPDMARPFARIGDHDDGAVSPDGRIMGTYLHGVFSADRFRHHFLRALGVEGGQMNYRESVEEALDELAEGLEASLDIDGLFALA.

The GATase cobBQ-type domain maps to 251–438 (ALIVAVPMLP…LHGVFSADRF (188 aa)). The Nucleophile role is filled by Cys-333. His-430 is a catalytic residue.

Belongs to the CobB/CobQ family. CobQ subfamily.

The protein operates within cofactor biosynthesis; adenosylcobalamin biosynthesis. Catalyzes amidations at positions B, D, E, and G on adenosylcobyrinic A,C-diamide. NH(2) groups are provided by glutamine, and one molecule of ATP is hydrogenolyzed for each amidation. This Brucella suis biovar 1 (strain 1330) protein is Cobyric acid synthase.